Here is an 80-residue protein sequence, read N- to C-terminus: Small ribosomal subunit protein bS18 (80 aa).

This sequence belongs to the bacterial ribosomal protein bS18 family. Part of the 30S ribosomal subunit. Forms a tight heterodimer with protein bS6.

In terms of biological role, binds as a heterodimer with protein bS6 to the central domain of the 16S rRNA, where it helps stabilize the platform of the 30S subunit. This chain is Small ribosomal subunit protein bS18, found in Beijerinckia indica subsp. indica (strain ATCC 9039 / DSM 1715 / NCIMB 8712).